The following is a 467-amino-acid chain: Probable glutamate decarboxylase gamma (467 aa).

Residue K278 is modified to N6-(pyridoxal phosphate)lysine.

This sequence belongs to the group II decarboxylase family. Pyridoxal 5'-phosphate serves as cofactor.

The enzyme catalyses L-glutamate + H(+) = 4-aminobutanoate + CO2. In Listeria monocytogenes serovar 1/2a (strain ATCC BAA-679 / EGD-e), this protein is Probable glutamate decarboxylase gamma.